The chain runs to 298 residues: Lipoyl synthase (298 aa).

Residues Cys40, Cys45, Cys51, Cys67, Cys71, Cys74, and Ser280 each contribute to the [4Fe-4S] cluster site. The Radical SAM core domain occupies 53 to 269 (AVRKTATFMI…KEIALSKGFS (217 aa)).

Belongs to the radical SAM superfamily. Lipoyl synthase family. [4Fe-4S] cluster is required as a cofactor.

It is found in the cytoplasm. It carries out the reaction [[Fe-S] cluster scaffold protein carrying a second [4Fe-4S](2+) cluster] + N(6)-octanoyl-L-lysyl-[protein] + 2 oxidized [2Fe-2S]-[ferredoxin] + 2 S-adenosyl-L-methionine + 4 H(+) = [[Fe-S] cluster scaffold protein] + N(6)-[(R)-dihydrolipoyl]-L-lysyl-[protein] + 4 Fe(3+) + 2 hydrogen sulfide + 2 5'-deoxyadenosine + 2 L-methionine + 2 reduced [2Fe-2S]-[ferredoxin]. The protein operates within protein modification; protein lipoylation via endogenous pathway; protein N(6)-(lipoyl)lysine from octanoyl-[acyl-carrier-protein]. Catalyzes the radical-mediated insertion of two sulfur atoms into the C-6 and C-8 positions of the octanoyl moiety bound to the lipoyl domains of lipoate-dependent enzymes, thereby converting the octanoylated domains into lipoylated derivatives. The protein is Lipoyl synthase of Bacillus anthracis (strain A0248).